The following is a 1011-amino-acid chain: Unconventional myosin ID (1011 aa).

The region spanning 7–690 (AGVQDFVLLD…TLFALEHQRN (684 aa)) is the Myosin motor domain. An ATP-binding site is contributed by 100–107 (GESGAGKT). An actin-binding region spans residues 567 to 589 (MADLVVTLLKKEPFYVRCIKPND). IQ domains follow at residues 694–714 (PHIV…RNFK) and 716–736 (MKAA…SYVQ). Residues 806–1007 (AGRRPYWGQA…EGNIIFEVPA (202 aa)) form the TH1 domain.

It belongs to the TRAFAC class myosin-kinesin ATPase superfamily. Myosin family. In terms of assembly, binds to F-actin. Interacts with arm. Interacts with shg. Interacts with ds (via intracellular region). In the embryo, expressed in gastric caeca, midgut cells of the proventriculus, and in the mid and hindgut. In the larval gut brush border, expression is in the terminal web domain. In the adult gut brush border, expression remains in the web domain and has also moved into the microvilli. Also expressed at low levels in follicle cells during oogenesis.

The protein resides in the cytoplasm. It is found in the cell cortex. The protein localises to the cytoskeleton. It localises to the cell membrane. Its subcellular location is the cell junction. The protein resides in the adherens junction. It is found in the cell projection. Its function is as follows. Unconventional myosin that functions as actin-based motor protein with ATPase activity. Binds to membranes enriched in phosphatidylinositol 4-5-bisphosphate, and can glide along actin filaments when anchored to a lipid bilayer. Generates left-right asymmetry at the level of single cells, organs and the whole body via its interaction with the actin cytoskeleton, both in the embryo and the adult. Normal left-right asymmetry of the larval midgut and hindgut requires expression in the embryonic hindgut epithelium during a critical time period, 10 to 12.75 hours after egg laying. This period corresponds to a late stage of germband retraction, and precedes left-right asymmetric morphogenesis. Expression in segment H1 of the imaginal ring is required at 0 to 24 hours after pupation for changes of cell shape and orientation in the H2 segment, which then gives rise to normal, dextral looping of the adult hindgut. Required during a critical period, 126-132 hours after egg laying, for normal, dextral rotation of the adult male genitalia. Has a double role by promoting dextral rotation in the posterior compartment of segment A8 of the male genital disk, and in repressing sinistral looping in the anterior compartment. In Drosophila melanogaster (Fruit fly), this protein is Unconventional myosin ID.